The primary structure comprises 740 residues: MSQSASTPATPITAKIVAEHGLTEAEYAKVLAIMGREPNLVELGIFSVMWSEHCSYKSSKKWLKTLPTTAPWVIQGPGENAGVIDIGDGLTAIFKMESHNHPSYIEPYQGAATGVGGILRDVFTMGARPVANLNALRFGDPSDPRTRHLISGVVAGIGGYGNCVGVPTVGGEVNFHASFNGNNLVNAMTVGVARADRIFYSAAAGIGNSVVYVGSKTGRDGIHGATMASAEFSEDSEEKRPTVQVGDPFTEKLLIEACLELMNTDAIVAIQDMGAAGLTSSCFEMASKGGMGVDLALDRVPMREEGMTPYELMLSESQERMLMVLKPGKEDMARALFEKWELDFAIIGTLTDSGRMVLTWHGEVVGDLPIDPLAAASPEYDRPWEPTPMAAAADLSGAEDTPWSEALLRLIGCPDVASRRWIWEQYDHLVMGNTLQRPGGDAAVIRLDEAPGKGLAMTTDCTPRYVHADPVEGGKQAVAEAWRNLTAVGARPLAITDNMNFGNPEKPRIMGQFVGACQGISEACLALDFPVVSGNVSLYNETNGQAILPTPTIGGVGVLDNVEASVSIALKAAGEAILVAGGFHGSTGAWLGQSLFLREILGREEGAPPPVDLAAERKVGDFVRGLILGASVTACHDLSDGGLLVALAEMAMAGDLGAELTLEGHPDNGRLFGEDQGRYLLTVAEGDRDAVVAAAEAAGVPLRVVGTTGGDALVVNGFVGPSVAALRKVHEEWLPTYMAG.

H53 is a catalytic residue. ATP contacts are provided by Y56 and K95. E97 serves as a coordination point for Mg(2+). Substrate-binding positions include 98–101 and R120; that span reads SHNH. H99 acts as the Proton acceptor in catalysis. A Mg(2+)-binding site is contributed by D121. Residue Q244 participates in substrate binding. D272 contacts Mg(2+). 316–318 serves as a coordination point for substrate; the sequence is ESQ. 2 residues coordinate ATP: D497 and G534. Mg(2+) is bound at residue N535. S537 lines the substrate pocket.

The protein belongs to the FGAMS family. As to quaternary structure, monomer. Part of the FGAM synthase complex composed of 1 PurL, 1 PurQ and 2 PurS subunits.

Its subcellular location is the cytoplasm. The enzyme catalyses N(2)-formyl-N(1)-(5-phospho-beta-D-ribosyl)glycinamide + L-glutamine + ATP + H2O = 2-formamido-N(1)-(5-O-phospho-beta-D-ribosyl)acetamidine + L-glutamate + ADP + phosphate + H(+). It participates in purine metabolism; IMP biosynthesis via de novo pathway; 5-amino-1-(5-phospho-D-ribosyl)imidazole from N(2)-formyl-N(1)-(5-phospho-D-ribosyl)glycinamide: step 1/2. Part of the phosphoribosylformylglycinamidine synthase complex involved in the purines biosynthetic pathway. Catalyzes the ATP-dependent conversion of formylglycinamide ribonucleotide (FGAR) and glutamine to yield formylglycinamidine ribonucleotide (FGAM) and glutamate. The FGAM synthase complex is composed of three subunits. PurQ produces an ammonia molecule by converting glutamine to glutamate. PurL transfers the ammonia molecule to FGAR to form FGAM in an ATP-dependent manner. PurS interacts with PurQ and PurL and is thought to assist in the transfer of the ammonia molecule from PurQ to PurL. The sequence is that of Phosphoribosylformylglycinamidine synthase subunit PurL from Rhodospirillum rubrum (strain ATCC 11170 / ATH 1.1.1 / DSM 467 / LMG 4362 / NCIMB 8255 / S1).